The sequence spans 570 residues: Dwarfin sma-4 (570 aa).

The interval 115–134 (SSQASSQPPPTPTVNPTPIP) is disordered. Over residues 121-134 (QPPPTPTVNPTPIP) the composition is skewed to pro residues. The MH1 domain occupies 150–273 (QISHVLQCYQ…YERVVSNRIT (124 aa)). 4 residues coordinate Zn(2+): cysteine 203, cysteine 247, cysteine 258, and histidine 263. An MH2 domain is found at 350–570 (WCSIIYYELD…LKNSSQFGSS (221 aa)).

It belongs to the dwarfin/SMAD family.

It is found in the cytoplasm. The protein resides in the nucleus. In terms of biological role, involved in TGF-beta pathway. The chain is Dwarfin sma-4 (sma-4) from Caenorhabditis elegans.